The sequence spans 257 residues: Protein-tyrosine-phosphatase IBR5 (257 aa).

Positions 49-185 constitute a Tyrosine-protein phosphatase domain; sequence FPSEILPEFL…LQEFEQGIFG (137 aa). Cys129 functions as the Phosphocysteine intermediate in the catalytic mechanism. The tract at residues 235-257 is disordered; the sequence is QEFTFGATPPKPTTGGDIAMDGS.

It belongs to the protein-tyrosine phosphatase family. In terms of assembly, interacts with SKP1A/ASK1 and with MPK12. In terms of tissue distribution, expressed in root tips and vasculature, cotyledons, stems, leaves vasculature and hydathodes, flowers, siliques, and seeds.

The protein resides in the nucleus. The catalysed reaction is O-phospho-L-tyrosyl-[protein] + H2O = L-tyrosyl-[protein] + phosphate. Required for the transduction of auxin and abscisic acid (ABA) signaling pathways. Dephosphorylates and inactivates the MAP kinase MPK12. This chain is Protein-tyrosine-phosphatase IBR5 (IBR5), found in Arabidopsis thaliana (Mouse-ear cress).